Here is a 195-residue protein sequence, read N- to C-terminus: MTTIQPFEPVDLFKTNNVNLDILTENFPLEFYFEYMIIWPDLFFKSSEMTVDPTFKHNISGYMMAKTEGKTTEWHTHITAVTVAPRFRRISLASKLCNTLETMTDVMPHEVNFIDLFVKCNNQLAIKLYEKLGYSVYRRVVGYYNSAEDGYPDTLKKVDDNKDAFDMRKAMARDRNRSVRPDGRSHKCYPHDVRF.

One can recognise an N-acetyltransferase domain in the interval 2–172; that stretch reads TTIQPFEPVD…DAFDMRKAMA (171 aa).

It belongs to the acetyltransferase family. GNAT subfamily. As to quaternary structure, component of the N-terminal acetyltransferase B (NatB) complex, which is composed of NAT3 and MDM20.

It is found in the cytoplasm. It catalyses the reaction N-terminal L-methionyl-L-asparaginyl-[protein] + acetyl-CoA = N-terminal N(alpha)-acetyl-L-methionyl-L-asparaginyl-[protein] + CoA + H(+). The enzyme catalyses N-terminal L-methionyl-L-glutaminyl-[protein] + acetyl-CoA = N-terminal N(alpha)-acetyl-L-methionyl-L-glutaminyl-[protein] + CoA + H(+). It carries out the reaction N-terminal L-methionyl-L-aspartyl-[protein] + acetyl-CoA = N-terminal N(alpha)-acetyl-L-methionyl-L-aspartyl-[protein] + CoA + H(+). The catalysed reaction is N-terminal L-methionyl-L-glutamyl-[protein] + acetyl-CoA = N-terminal N(alpha)-acetyl-L-methionyl-L-glutamyl-[protein] + CoA + H(+). Its function is as follows. Catalytic subunit of the NatB N-terminal acetyltransferase, which catalyzes acetylation of the amino-terminal methionine residues of all proteins beginning with Met-Asp or Met-Glu and of some proteins beginning with Met-Asn, Met-Gln or Met-Met. NatB acetylates TPM1 protein and regulates tropomyocin-actin interactions, it is presumed to N-acetylate 15% of all yeast proteins. This chain is N-terminal acetyltransferase B complex catalytic subunit NAT3, found in Saccharomyces cerevisiae (strain ATCC 204508 / S288c) (Baker's yeast).